Here is a 124-residue protein sequence, read N- to C-terminus: Small ribosomal subunit protein uS12 (124 aa).

Asp89 carries the 3-methylthioaspartic acid modification.

This sequence belongs to the universal ribosomal protein uS12 family. Part of the 30S ribosomal subunit. Contacts proteins S8 and S17. May interact with IF1 in the 30S initiation complex.

Its function is as follows. With S4 and S5 plays an important role in translational accuracy. Interacts with and stabilizes bases of the 16S rRNA that are involved in tRNA selection in the A site and with the mRNA backbone. Located at the interface of the 30S and 50S subunits, it traverses the body of the 30S subunit contacting proteins on the other side and probably holding the rRNA structure together. The combined cluster of proteins S8, S12 and S17 appears to hold together the shoulder and platform of the 30S subunit. The polypeptide is Small ribosomal subunit protein uS12 (Vibrio campbellii (strain ATCC BAA-1116)).